The sequence spans 1368 residues: DNA-directed RNA polymerase subunit beta (1368 aa).

It belongs to the RNA polymerase beta chain family. In terms of assembly, the RNAP catalytic core consists of 2 alpha, 1 beta, 1 beta' and 1 omega subunit. When a sigma factor is associated with the core the holoenzyme is formed, which can initiate transcription.

It carries out the reaction RNA(n) + a ribonucleoside 5'-triphosphate = RNA(n+1) + diphosphate. DNA-dependent RNA polymerase catalyzes the transcription of DNA into RNA using the four ribonucleoside triphosphates as substrates. The sequence is that of DNA-directed RNA polymerase subunit beta from Cupriavidus metallidurans (strain ATCC 43123 / DSM 2839 / NBRC 102507 / CH34) (Ralstonia metallidurans).